A 546-amino-acid polypeptide reads, in one-letter code: Chaperonin GroEL (546 aa).

Residues 30–33 (TLGP), K51, 87–91 (DGTTT), G415, and D496 contribute to the ATP site. Positions 526–546 (PEPKSAPAGGMGGMGGMDGMM) are disordered. Residues 534 to 546 (GGMGGMGGMDGMM) show a composition bias toward gly residues.

The protein belongs to the chaperonin (HSP60) family. Forms a cylinder of 14 subunits composed of two heptameric rings stacked back-to-back. Interacts with the co-chaperonin GroES.

The protein localises to the cytoplasm. The catalysed reaction is ATP + H2O + a folded polypeptide = ADP + phosphate + an unfolded polypeptide.. Functionally, together with its co-chaperonin GroES, plays an essential role in assisting protein folding. The GroEL-GroES system forms a nano-cage that allows encapsulation of the non-native substrate proteins and provides a physical environment optimized to promote and accelerate protein folding. This is Chaperonin GroEL from Rhodopseudomonas palustris.